The chain runs to 431 residues: Protein cereblon (431 aa).

Residues 1–36 (MGNQLQLLPENEEEEEDDMETEDRDGEDVEKPSIIN) are disordered. Positions 10–28 (ENEEEEEDDMETEDRDGED) are enriched in acidic residues. The 241-residue stretch at 69-309 (LPVLPHVALI…CELDIMDRCT (241 aa)) folds into the Lon N-terminal domain. The CULT domain occupies 308–416 (CTSLCCKQCQ…LTRSALLPTI (109 aa)). The Zn(2+) site is built by Cys313 and Cys316. His368, Trp370, and Trp376 together coordinate (S)-thalidomide. Positions 381 and 384 each coordinate Zn(2+).

This sequence belongs to the CRBN family. As to quaternary structure, component of a DCX (DDB1-CUL4-X-box) protein ligase complex. As to expression, highly expressed in brain, head, vasculature otic vesicles and developing pectoral fins.

The protein resides in the cytoplasm. Its subcellular location is the nucleus. Its pathway is protein modification; protein ubiquitination. Its function is as follows. Substrate recognition component of a DCX (DDB1-CUL4-X-box) E3 protein ligase complex that mediates the ubiquitination and subsequent proteasomal degradation of target proteins, such as MEIS2. Normal degradation of key regulatory proteins is required for normal limb outgrowth and expression of the fibroblast growth factor FGF8. Maintains presynaptic glutamate release and consequently cognitive functions, such as memory and learning, by negatively regulating large-conductance calcium-activated potassium (BK) channels in excitatory neurons. Likely to function by regulating the assembly and neuronal surface expression of BK channels via its interaction with KCNT1. May also be involved in regulating anxiety-like behaviors via a BK channel-independent mechanism. The polypeptide is Protein cereblon (crbn) (Danio rerio (Zebrafish)).